Here is a 294-residue protein sequence, read N- to C-terminus: Nucleophosmin (294 aa).

The segment covering Leu-121 to Asp-133 has biased composition (acidic residues). The interval Leu-121–Leu-244 is disordered. A Nuclear localization signal motif is present at residues Pro-153–Lys-158. A compositionally biased stretch (acidic residues) spans Glu-161 to Glu-186. The short motif at Pro-190 to Arg-196 is the Nuclear localization signal element. The segment covering Lys-223 to Leu-233 has biased composition (basic and acidic residues).

This sequence belongs to the nucleoplasmin family. As to quaternary structure, decamer formed by two pentameric rings associated in a head-to-head fashion. Post-translationally, phosphorylated.

It localises to the cytoplasm. It is found in the nucleus. The protein localises to the nucleoplasm. Its subcellular location is the nucleolus. Functionally, acts as a chaperonin for the core histones H3, H2B and H4. Associated with nucleolar ribonucleoprotein structures and bind single-stranded nucleic acids. It may function in the assembly and/or transport of ribosome. May stimulate endonuclease activity on apurinic/apyrimidinic (AP) double-stranded DNA. May inhibit endonuclease activity on AP single-stranded RNA. The chain is Nucleophosmin (NPM1) from Gallus gallus (Chicken).